A 208-amino-acid chain; its full sequence is Holliday junction resolvase RecU (208 aa).

The tract at residues 1–30 is disordered; sequence MNYPNGKPFNRNKSQVGRTHKGQTSKIDYG. Thr-87, Asp-89, Glu-102, and Gln-121 together coordinate Mg(2+).

The protein belongs to the RecU family. Requires Mg(2+) as cofactor.

The protein localises to the cytoplasm. It catalyses the reaction Endonucleolytic cleavage at a junction such as a reciprocal single-stranded crossover between two homologous DNA duplexes (Holliday junction).. Its function is as follows. Endonuclease that resolves Holliday junction intermediates in genetic recombination. Cleaves mobile four-strand junctions by introducing symmetrical nicks in paired strands. Promotes annealing of linear ssDNA with homologous dsDNA. Required for DNA repair, homologous recombination and chromosome segregation. In Staphylococcus saprophyticus subsp. saprophyticus (strain ATCC 15305 / DSM 20229 / NCIMB 8711 / NCTC 7292 / S-41), this protein is Holliday junction resolvase RecU.